We begin with the raw amino-acid sequence, 83 residues long: Apolipoprotein C-I, basic form (83 aa).

An N-terminal signal peptide occupies residues 1–26; sequence MRLFLSLPVLVVVLSMVLEGPAPVQG.

It belongs to the apolipoprotein C1 family.

It is found in the secreted. Functionally, inhibitor of lipoprotein binding to the low density lipoprotein (LDL) receptor, LDL receptor-related protein, and very low density lipoprotein (VLDL) receptor. Associates with high density lipoproteins (HDL) and the triacylglycerol-rich lipoproteins in the plasma and makes up about 10% of the protein of the VLDL and 2% of that of HDL. Appears to interfere directly with fatty acid uptake and is also the major plasma inhibitor of cholesteryl ester transfer protein (CETP). Binds free fatty acids and reduces their intracellular esterification. Modulates the interaction of APOE with beta-migrating VLDL and inhibits binding of beta-VLDL to the LDL receptor-related protein. The chain is Apolipoprotein C-I, basic form (APOC1) from Papio anubis (Olive baboon).